The following is a 298-amino-acid chain: Protoheme IX farnesyltransferase (298 aa).

The next 9 helical transmembrane spans lie at 16-36 (VVAL…PDMP), 45-65 (ALGF…NQLL), 93-113 (VFAG…VNVI), 114-134 (TAVL…VYLK), 141-161 (IVIG…AVTG), 172-192 (SLLV…LAIF), 218-238 (ILVY…VGMS), 241-261 (FYLG…WRML), and 277-297 (IVYL…LPWV).

It belongs to the UbiA prenyltransferase family. Protoheme IX farnesyltransferase subfamily.

The protein resides in the cell inner membrane. It catalyses the reaction heme b + (2E,6E)-farnesyl diphosphate + H2O = Fe(II)-heme o + diphosphate. Its pathway is porphyrin-containing compound metabolism; heme O biosynthesis; heme O from protoheme: step 1/1. Its function is as follows. Converts heme B (protoheme IX) to heme O by substitution of the vinyl group on carbon 2 of heme B porphyrin ring with a hydroxyethyl farnesyl side group. The sequence is that of Protoheme IX farnesyltransferase from Xanthomonas axonopodis pv. citri (strain 306).